Consider the following 201-residue polypeptide: Recombination protein RecR (201 aa).

The C4-type zinc-finger motif lies at 60-75; it reads CSRCGNVDTVDPCTVC. Positions 83–178 constitute a Toprim domain; it reads SIIIVVEDVS…KITRLAHGVP (96 aa).

The protein belongs to the RecR family.

Its function is as follows. May play a role in DNA repair. It seems to be involved in an RecBC-independent recombinational process of DNA repair. It may act with RecF and RecO. This chain is Recombination protein RecR, found in Rhizobium leguminosarum bv. trifolii (strain WSM2304).